Reading from the N-terminus, the 238-residue chain is Ankyrin repeat domain-containing protein 49 (238 aa).

S48 is subject to Phosphoserine. ANK repeat units follow at residues 77–105 (LLWA…TRDE), 106–135 (DKYT…DVHA), 139–168 (DGWT…DVNA), and 172–205 (GLLT…GLKN).

Its subcellular location is the nucleus. In terms of biological role, may have a role in spermatogenesis where it promotes autophagy in response to serum starvation, via the NF-kappaB pathway. This chain is Ankyrin repeat domain-containing protein 49 (ANKRD49), found in Bos taurus (Bovine).